A 200-amino-acid polypeptide reads, in one-letter code: MYAYFRGELISSSRDNAIVDVGGVAYRLLISNSTYRQLPSSGDQVKLLAHLHVKEDLMQLYGFIEEEERQLFLLLLSISGVGPKLALAILSGLPVEEIQEAIMANKPETLFGISGVGKKTAARIILELRDRILKLQQTRPGKTAGAGSVASLSEDALQALMTLGFSRASAQQAVTRALLSAENPGVEDIVREALQNIRNH.

The tract at residues 1–64 (MYAYFRGELI…EDLMQLYGFI (64 aa)) is domain I. The domain II stretch occupies residues 65–143 (EEEERQLFLL…KLQQTRPGKT (79 aa)). The segment at 144-154 (AGAGSVASLSE) is flexible linker. Residues 154 to 200 (EDALQALMTLGFSRASAQQAVTRALLSAENPGVEDIVREALQNIRNH) form a domain III region.

This sequence belongs to the RuvA family. As to quaternary structure, homotetramer. Forms an RuvA(8)-RuvB(12)-Holliday junction (HJ) complex. HJ DNA is sandwiched between 2 RuvA tetramers; dsDNA enters through RuvA and exits via RuvB. An RuvB hexamer assembles on each DNA strand where it exits the tetramer. Each RuvB hexamer is contacted by two RuvA subunits (via domain III) on 2 adjacent RuvB subunits; this complex drives branch migration. In the full resolvosome a probable DNA-RuvA(4)-RuvB(12)-RuvC(2) complex forms which resolves the HJ.

Its subcellular location is the cytoplasm. The RuvA-RuvB-RuvC complex processes Holliday junction (HJ) DNA during genetic recombination and DNA repair, while the RuvA-RuvB complex plays an important role in the rescue of blocked DNA replication forks via replication fork reversal (RFR). RuvA specifically binds to HJ cruciform DNA, conferring on it an open structure. The RuvB hexamer acts as an ATP-dependent pump, pulling dsDNA into and through the RuvAB complex. HJ branch migration allows RuvC to scan DNA until it finds its consensus sequence, where it cleaves and resolves the cruciform DNA. This chain is Holliday junction branch migration complex subunit RuvA, found in Prosthecochloris aestuarii (strain DSM 271 / SK 413).